A 218-amino-acid chain; its full sequence is Leucine-rich repeat protein 2 (218 aa).

The first 27 residues, 1–27 (MVAQNSRRELLAASLILTLALIRLTEA), serve as a signal peptide directing secretion. LRR repeat units lie at residues 69–93 (HHQV…LGKL), 94–117 (EHLQ…LGNL), 119–141 (SLIS…LGKL), 142–165 (KSLV…LTVI), and 167–190 (SLKV…PFEH).

Its function is as follows. Probably involved in plant defense response. The chain is Leucine-rich repeat protein 2 from Arabidopsis thaliana (Mouse-ear cress).